We begin with the raw amino-acid sequence, 42 residues long: Lanthionine-containing peptide SapB precursor RamS (42 aa).

Residues 1–21 (MNLFDLQSMETPKEEAMGDVE) constitute a propeptide that is removed on maturation. Positions 1–21 (MNLFDLQSMETPKEEAMGDVE) are disordered. 2 consecutive cross-links (lanthionine (Ser-Cys)) follow at residues 24–31 (SRASLLLC) and 34–41 (SSLSITTC). Residues S27 and S37 each carry the 2,3-didehydroalanine (Ser) modification.

It belongs to the lanthionine-containing morphogen family. Post-translationally, maturation involves the enzymatic conversion of Ser into dehydrated AA and the formation of thioether bonds with cysteine, probably by RamC. This is followed by membrane translocation and cleavage of the modified precursor. The RamS precursor protein (detected by an anti-propeptide antibody and by a C-terminal His-tag) is detected from at least 16 hours post-germination; its apparent molecular weight decreases starting from about 34 hours, when its probable modifying enzyme ramC is transcribed. Surfactin, a B.subtilis cyclic lipopeptide antibiotic which prevents aerial hyphae formation in S.coelicolor, decreases localization of RamS precursor protein to the cell membrane, suggesting that processing only occurs at the cell membrane.

It localises to the cell membrane. The protein localises to the secreted. It is found in the spore wall. Stably accumulated precursor of SapB. In terms of biological role, lanthionine-containing peptide devoid of antibiotic properties. A surface active peptide involved in the efficient formation of aerial mycelium when cells are grown in rich media. Has an overlapping function with the surface-active chaplin proteins; chaplins are essential on minimal medium while on rich medium both chaplins and SapB are required for efficient aerial hyphae formation. Required under conditions of high osmolarity where it may change the physical properties of the chaplin layer to allow hyphae to grow into air. Suggested to self-assemble at air-water interfaces, thus providing a film of surfactant through which nascent aerial hyphae can emerge; the aerial hyphae differentiate further into spores. Application to bald mutants (bld, unable to make aerial hyphae) restores hyphae growth. Application to chaplin negative mutants as well as ramC-ramS-ramA-ramB and ramR deletions also restores aerial hyphae growth and sporulation. Reduces surface tension of water from 72 to 30 mJ/m(2). The polypeptide is Lanthionine-containing peptide SapB precursor RamS (ramS) (Streptomyces coelicolor (strain ATCC BAA-471 / A3(2) / M145)).